A 248-amino-acid polypeptide reads, in one-letter code: Mannose-binding protein C (248 aa).

Positions 1-20 (MSLIPSLSLLLMSMVAASYS) are cleaved as a signal peptide. One can recognise a Collagen-like domain in the interval 42–99 (GINGFPGKDGRDGTKGEKGEPGQGLRGLQGPPGKLGPPGNPGPSGSPGPKGQKGDPGK). A disordered region spans residues 43-107 (INGFPGKDGR…GKSPDCDSSL (65 aa)). Pro-47 carries the 4-hydroxyproline modification. Over residues 49–61 (KDGRDGTKGEKGE) the composition is skewed to basic and acidic residues. 4 positions are modified to 4-hydroxyproline: Pro-73, Pro-79, Pro-82, and Pro-88. The segment covering 75–87 (KLGPPGNPGPSGS) has biased composition (pro residues). Over residues 93-102 (QKGDPGKSPD) the composition is skewed to basic and acidic residues. Residues 112 to 130 (RKALQTEMARIKKWLTFSL) adopt a coiled-coil conformation. The C-type lectin domain occupies 134–245 (VGNKFFLTNG…CSSSHLAVCE (112 aa)). Disulfide bonds link Cys-155–Cys-244 and Cys-222–Cys-236.

In terms of assembly, oligomeric complex of 3 or more homotrimers. Interacts with MASP1 and MASP2. Interacts with MEP1A and MEP1B and may inhibit their catalytic activity. Post-translationally, hydroxylation on proline residues within the sequence motif, GXPG, is most likely to be 4-hydroxy as this fits the requirement for 4-hydroxylation in vertebrates.

It localises to the secreted. In terms of biological role, calcium-dependent lectin involved in innate immune defense. Binds mannose, fucose and N-acetylglucosamine on different microorganisms and activates the lectin complement pathway. Binds to late apoptotic cells, as well as to apoptotic blebs and to necrotic cells, but not to early apoptotic cells, facilitating their uptake by macrophages. The chain is Mannose-binding protein C (MBL2) from Hylobates lar (Lar gibbon).